The sequence spans 810 residues: LPS-assembly protein LptD (810 aa).

A signal peptide spans 1–29; that stretch reads MTKWTLGYSYPIALTISLIPALTPAIVQA.

It belongs to the LptD family. As to quaternary structure, component of the lipopolysaccharide transport and assembly complex. Interacts with LptE and LptA.

It is found in the cell outer membrane. Together with LptE, is involved in the assembly of lipopolysaccharide (LPS) at the surface of the outer membrane. This Aeromonas salmonicida (strain A449) protein is LPS-assembly protein LptD.